The following is a 506-amino-acid chain: Glycerol kinase (506 aa).

Threonine 12 serves as a coordination point for ADP. Positions 12, 13, and 14 each coordinate ATP. Position 12 (threonine 12) interacts with sn-glycerol 3-phosphate. Arginine 16 is an ADP binding site. Arginine 82, glutamate 83, tyrosine 134, and aspartate 246 together coordinate sn-glycerol 3-phosphate. Residues arginine 82, glutamate 83, tyrosine 134, aspartate 246, and glutamine 247 each coordinate glycerol. ADP is bound by residues threonine 268 and glycine 312. Residues threonine 268, glycine 312, glutamine 316, and glycine 413 each coordinate ATP. Positions 413 and 417 each coordinate ADP.

The protein belongs to the FGGY kinase family.

It catalyses the reaction glycerol + ATP = sn-glycerol 3-phosphate + ADP + H(+). It participates in polyol metabolism; glycerol degradation via glycerol kinase pathway; sn-glycerol 3-phosphate from glycerol: step 1/1. Inhibited by fructose 1,6-bisphosphate (FBP). Key enzyme in the regulation of glycerol uptake and metabolism. Catalyzes the phosphorylation of glycerol to yield sn-glycerol 3-phosphate. This is Glycerol kinase from Leifsonia xyli subsp. xyli (strain CTCB07).